Consider the following 215-residue polypeptide: Cytochrome b6 (215 aa).

Residues 32–52 (IFYCLGGITFTCFIIQVATGF) form a helical membrane-spanning segment. A heme c-binding site is contributed by Cys-35. Residues His-86 and His-100 each contribute to the heme b site. 3 helical membrane-spanning segments follow: residues 90-110 (ASMM…TGGF), 116-136 (LTWV…VTGY), and 186-206 (LHTF…FLMI). Heme b is bound by residues His-187 and His-202.

The protein belongs to the cytochrome b family. PetB subfamily. In terms of assembly, the 4 large subunits of the cytochrome b6-f complex are cytochrome b6, subunit IV (17 kDa polypeptide, PetD), cytochrome f and the Rieske protein, while the 4 small subunits are PetG, PetL, PetM and PetN. The complex functions as a dimer. The cofactor is heme b. Requires heme c as cofactor.

It localises to the plastid. It is found in the chloroplast thylakoid membrane. Its function is as follows. Component of the cytochrome b6-f complex, which mediates electron transfer between photosystem II (PSII) and photosystem I (PSI), cyclic electron flow around PSI, and state transitions. The protein is Cytochrome b6 of Euglena gracilis.